A 78-amino-acid polypeptide reads, in one-letter code: Large ribosomal subunit protein bL28 (78 aa).

It belongs to the bacterial ribosomal protein bL28 family.

In Aromatoleum aromaticum (strain DSM 19018 / LMG 30748 / EbN1) (Azoarcus sp. (strain EbN1)), this protein is Large ribosomal subunit protein bL28.